Reading from the N-terminus, the 182-residue chain is ATP synthase subunit b (182 aa).

The chain crosses the membrane as a helical span at residues 25–45; sequence VVLAGFAVLFYIVVKFVVPMF.

The protein belongs to the ATPase B chain family. F-type ATPases have 2 components, F(1) - the catalytic core - and F(0) - the membrane proton channel. F(1) has five subunits: alpha(3), beta(3), gamma(1), delta(1), epsilon(1). F(0) has three main subunits: a(1), b(2) and c(10-14). The alpha and beta chains form an alternating ring which encloses part of the gamma chain. F(1) is attached to F(0) by a central stalk formed by the gamma and epsilon chains, while a peripheral stalk is formed by the delta and b chains.

It localises to the cell membrane. Functionally, f(1)F(0) ATP synthase produces ATP from ADP in the presence of a proton or sodium gradient. F-type ATPases consist of two structural domains, F(1) containing the extramembraneous catalytic core and F(0) containing the membrane proton channel, linked together by a central stalk and a peripheral stalk. During catalysis, ATP synthesis in the catalytic domain of F(1) is coupled via a rotary mechanism of the central stalk subunits to proton translocation. In terms of biological role, component of the F(0) channel, it forms part of the peripheral stalk, linking F(1) to F(0). This is ATP synthase subunit b from Arthrobacter sp. (strain FB24).